A 115-amino-acid polypeptide reads, in one-letter code: MARVKRGNIARKRRNKILNLAKGFIGGNKNLFRTANQRVMKALCNAYRDRRRRKRDFRRLWISRINASARINGTNYSKLINGMKNAEIIINRKMLAQLALNDPKCFEKIVSSVSN.

Belongs to the bacterial ribosomal protein bL20 family.

Functionally, binds directly to 23S ribosomal RNA and is necessary for the in vitro assembly process of the 50S ribosomal subunit. It is not involved in the protein synthesizing functions of that subunit. This Prochlorococcus marinus (strain MIT 9301) protein is Large ribosomal subunit protein bL20.